Consider the following 473-residue polypeptide: Photosystem II CP43 reaction center protein (473 aa).

Positions 1 to 14 are excised as a propeptide; that stretch reads MKTLYSRRRFYHVE. Thr-15 bears the N-acetylthreonine mark. At Thr-15 the chain carries Phosphothreonine. The next 5 helical transmembrane spans lie at 69 to 93, 134 to 155, 178 to 200, 255 to 275, and 291 to 312; these read LFEVAHFVPEKPMYEQGLILLPHLA, LLGPETLEESFPFFGYVWKDRN, KALYFGGVYDTWAPGGGDVRKIT, KPFAWARRALVWSGEAYLSYS, and WFNNTAYPSEFYGPTGPEASQA. Residue Glu-367 coordinates [CaMn4O5] cluster. A helical membrane pass occupies residues 447-471; that stretch reads RARAAAAGFEKGIDRDFEPVLSMTP.

The protein belongs to the PsbB/PsbC family. PsbC subfamily. PSII is composed of 1 copy each of membrane proteins PsbA, PsbB, PsbC, PsbD, PsbE, PsbF, PsbH, PsbI, PsbJ, PsbK, PsbL, PsbM, PsbT, PsbX, PsbY, PsbZ, Psb30/Ycf12, at least 3 peripheral proteins of the oxygen-evolving complex and a large number of cofactors. It forms dimeric complexes. The cofactor is Binds multiple chlorophylls and provides some of the ligands for the Ca-4Mn-5O cluster of the oxygen-evolving complex. It may also provide a ligand for a Cl- that is required for oxygen evolution. PSII binds additional chlorophylls, carotenoids and specific lipids..

Its subcellular location is the plastid. It localises to the chloroplast thylakoid membrane. In terms of biological role, one of the components of the core complex of photosystem II (PSII). It binds chlorophyll and helps catalyze the primary light-induced photochemical processes of PSII. PSII is a light-driven water:plastoquinone oxidoreductase, using light energy to abstract electrons from H(2)O, generating O(2) and a proton gradient subsequently used for ATP formation. In Solanum bulbocastanum (Wild potato), this protein is Photosystem II CP43 reaction center protein.